A 243-amino-acid chain; its full sequence is 2-C-methyl-D-erythritol 4-phosphate cytidylyltransferase (243 aa).

It belongs to the IspD/TarI cytidylyltransferase family. IspD subfamily.

It catalyses the reaction 2-C-methyl-D-erythritol 4-phosphate + CTP + H(+) = 4-CDP-2-C-methyl-D-erythritol + diphosphate. The protein operates within isoprenoid biosynthesis; isopentenyl diphosphate biosynthesis via DXP pathway; isopentenyl diphosphate from 1-deoxy-D-xylulose 5-phosphate: step 2/6. Catalyzes the formation of 4-diphosphocytidyl-2-C-methyl-D-erythritol from CTP and 2-C-methyl-D-erythritol 4-phosphate (MEP). This Rhodopirellula baltica (strain DSM 10527 / NCIMB 13988 / SH1) protein is 2-C-methyl-D-erythritol 4-phosphate cytidylyltransferase.